The chain runs to 373 residues: Dual-specificity RNA methyltransferase RlmN (373 aa).

Catalysis depends on Glu94, which acts as the Proton acceptor. One can recognise a Radical SAM core domain in the interval 100–339 (EEDRATLCVS…VIVRKTRGDD (240 aa)). Cys107 and Cys344 are joined by a disulfide. 3 residues coordinate [4Fe-4S] cluster: Cys114, Cys118, and Cys121. S-adenosyl-L-methionine is bound by residues 168 to 169 (GE), Ser200, 222 to 224 (SIH), and Asn301. Catalysis depends on Cys344, which acts as the S-methylcysteine intermediate.

It belongs to the radical SAM superfamily. RlmN family. [4Fe-4S] cluster serves as cofactor.

Its subcellular location is the cytoplasm. It carries out the reaction adenosine(2503) in 23S rRNA + 2 reduced [2Fe-2S]-[ferredoxin] + 2 S-adenosyl-L-methionine = 2-methyladenosine(2503) in 23S rRNA + 5'-deoxyadenosine + L-methionine + 2 oxidized [2Fe-2S]-[ferredoxin] + S-adenosyl-L-homocysteine. It catalyses the reaction adenosine(37) in tRNA + 2 reduced [2Fe-2S]-[ferredoxin] + 2 S-adenosyl-L-methionine = 2-methyladenosine(37) in tRNA + 5'-deoxyadenosine + L-methionine + 2 oxidized [2Fe-2S]-[ferredoxin] + S-adenosyl-L-homocysteine. Its function is as follows. Specifically methylates position 2 of adenine 2503 in 23S rRNA and position 2 of adenine 37 in tRNAs. m2A2503 modification seems to play a crucial role in the proofreading step occurring at the peptidyl transferase center and thus would serve to optimize ribosomal fidelity. In Shewanella loihica (strain ATCC BAA-1088 / PV-4), this protein is Dual-specificity RNA methyltransferase RlmN.